Here is a 103-residue protein sequence, read N- to C-terminus: Co-chaperonin GroES (103 aa).

Belongs to the GroES chaperonin family. As to quaternary structure, heptamer of 7 subunits arranged in a ring. Interacts with the chaperonin GroEL.

It is found in the cytoplasm. In terms of biological role, together with the chaperonin GroEL, plays an essential role in assisting protein folding. The GroEL-GroES system forms a nano-cage that allows encapsulation of the non-native substrate proteins and provides a physical environment optimized to promote and accelerate protein folding. GroES binds to the apical surface of the GroEL ring, thereby capping the opening of the GroEL channel. The protein is Co-chaperonin GroES of Synechococcus sp. (strain CC9605).